The sequence spans 97 residues: YcgL domain-containing protein PP_4590 (97 aa).

Positions 3-87 (RICSIYKSPR…LEDEYIEHLP (85 aa)) constitute a YcgL domain.

The protein is YcgL domain-containing protein PP_4590 of Pseudomonas putida (strain ATCC 47054 / DSM 6125 / CFBP 8728 / NCIMB 11950 / KT2440).